Here is a 429-residue protein sequence, read N- to C-terminus: Gamma-glutamyl phosphate reductase (429 aa).

This sequence belongs to the gamma-glutamyl phosphate reductase family.

Its subcellular location is the cytoplasm. The enzyme catalyses L-glutamate 5-semialdehyde + phosphate + NADP(+) = L-glutamyl 5-phosphate + NADPH + H(+). Its pathway is amino-acid biosynthesis; L-proline biosynthesis; L-glutamate 5-semialdehyde from L-glutamate: step 2/2. Its function is as follows. Catalyzes the NADPH-dependent reduction of L-glutamate 5-phosphate into L-glutamate 5-semialdehyde and phosphate. The product spontaneously undergoes cyclization to form 1-pyrroline-5-carboxylate. This Bradyrhizobium sp. (strain BTAi1 / ATCC BAA-1182) protein is Gamma-glutamyl phosphate reductase.